We begin with the raw amino-acid sequence, 349 residues long: MPPKRDGEVLVLGIESTAHTFGVGIVSTRPPIVRADVRRRWTPREGGILPREVAEFFSLHAGEAVAEALGEAGVSIADVDAVAVALGPGMGPALRVGATVARALSAKYGKPLVPVNHAVAHVEAARFTTGLRDPVALYVAGGNTTVVSFVAGRYRTFGETLDIALGNLLDTFAREAGIAPPYVAGGLHAVDRCAEGGGFVEGIPYVVKGQDVSFSGILTAALRLLKRGARLSDVCYTLREVAFSSVVEVTERCLAHTGKRQATLTGGVAANRVLNEKMSLMAGLHGAVYRPVDVRLSGDNGVMIALTGLAAYLHGVIIDPGEAYIRQRWRIDEVDIPWYPWLPGDPPPG.

3 residues coordinate Fe cation: H117, H121, and Y138. Substrate-binding positions include 138–142 (YVAGG), D170, D191, and N271. D299 provides a ligand contact to Fe cation.

The protein belongs to the KAE1 / TsaD family. The cofactor is Fe(2+).

It localises to the cytoplasm. It catalyses the reaction L-threonylcarbamoyladenylate + adenosine(37) in tRNA = N(6)-L-threonylcarbamoyladenosine(37) in tRNA + AMP + H(+). Required for the formation of a threonylcarbamoyl group on adenosine at position 37 (t(6)A37) in tRNAs that read codons beginning with adenine. Is probably involved in the transfer of the threonylcarbamoyl moiety of threonylcarbamoyl-AMP (TC-AMP) to the N6 group of A37. The protein is tRNA N6-adenosine threonylcarbamoyltransferase of Aeropyrum pernix (strain ATCC 700893 / DSM 11879 / JCM 9820 / NBRC 100138 / K1).